The sequence spans 229 residues: Ribonuclease 3 (229 aa).

The RNase III domain maps to 5–136 (LAELERALGI…VIGAIYLDQG (132 aa)). Residue glutamate 49 participates in Mg(2+) binding. The active site involves aspartate 53. 2 residues coordinate Mg(2+): aspartate 122 and glutamate 125. The active site involves glutamate 125. One can recognise a DRBM domain in the interval 161–229 (DPTTRLQEIV…AQAALADIDR (69 aa)).

It belongs to the ribonuclease III family. As to quaternary structure, homodimer. Requires Mg(2+) as cofactor.

It localises to the cytoplasm. The catalysed reaction is Endonucleolytic cleavage to 5'-phosphomonoester.. In terms of biological role, digests double-stranded RNA. Involved in the processing of primary rRNA transcript to yield the immediate precursors to the large and small rRNAs (23S and 16S). Processes some mRNAs, and tRNAs when they are encoded in the rRNA operon. Processes pre-crRNA and tracrRNA of type II CRISPR loci if present in the organism. The chain is Ribonuclease 3 from Chloroflexus aggregans (strain MD-66 / DSM 9485).